The sequence spans 1244 residues: Ras-specific guanine nucleotide-releasing factor 1 (1244 aa).

In terms of domain architecture, PH 1 spans Asp-22 to Tyr-129. Ser-71 carries the phosphoserine; by PLK2 modification. The 26-residue stretch at Lys-204 to Tyr-229 folds into the IQ domain. The DH domain maps to Lys-240–Glu-426. The PH 2 domain occupies Thr-456–Asp-582. Phosphoserine; by PLK2 is present on residues Ser-575 and Ser-611. The region spanning Lys-629–Pro-743 is the N-terminal Ras-GEF domain. The disordered stretch occupies residues Gly-707 to Ser-730. Ser-739 carries the post-translational modification Phosphoserine. Phosphoserine; by PLK2 is present on residues Ser-760 and Ser-781. The disordered stretch occupies residues Thr-800–Arg-840. Acidic residues predominate over residues Glu-818–Glu-830. Ser-854 is subject to Phosphoserine; by PLK2. The 233-residue stretch at Ser-1009 to Lys-1241 folds into the Ras-GEF domain.

As to quaternary structure, homooligomer and heterooligomer with RASGRF2. Interacts with USP8, thereby regulating its stability. Phosphorylated by PLK2, leading to ubiquitination and degradation by the proteasome. Post-translationally, ubiquitinated and degraded following phosphorylation by PLK2. In terms of processing, phosphorylated by SRC and LCK. Phosphorylation by LCK increases its capacity to stimulate the GDP/GTP exchange on Ras, whereas its phosphorylation by SRC seems not to have an effect on stimulation activity.

Functionally, promotes the exchange of Ras-bound GDP by GTP. This chain is Ras-specific guanine nucleotide-releasing factor 1 (Rasgrf1), found in Rattus norvegicus (Rat).